Consider the following 324-residue polypeptide: Casein kinase I (324 aa).

The 270-residue stretch at 9–278 (YALGKKLGSG…LRRLLKDLFI (270 aa)) folds into the Protein kinase domain. Residues 15 to 23 (LGSGSFGDI) and Lys-38 contribute to the ATP site. Asp-128 (proton acceptor) is an active-site residue.

The protein belongs to the protein kinase superfamily. CK1 Ser/Thr protein kinase family. Casein kinase I subfamily. As to quaternary structure, interacts with rhoptry protein RON3; the interaction is direct. Interacts with CK2alpha; the interaction is direct. Interacts with nucleosome assembly protein NAPL. Interacts with RAB5b. Interacts with host GAPVD1. Interacts with host SNX22. It depends on Mg(2+) as a cofactor.

It localises to the cytoplasm. It is found in the cytoplasmic vesicle. Its subcellular location is the secretory vesicle. The protein resides in the microneme. The protein localises to the secreted. It localises to the host cell surface. The enzyme catalyses L-seryl-[protein] + ATP = O-phospho-L-seryl-[protein] + ADP + H(+). It catalyses the reaction L-threonyl-[protein] + ATP = O-phospho-L-threonyl-[protein] + ADP + H(+). Its function is as follows. Serine/threonine-protein kinase likely to be involved in many cellular processes. Phosphorylates rhoptry protein RON3, nucleosome assembly protein NAPL and DNA/RNA-binding protein ALBA4 in vitro. This is Casein kinase I from Plasmodium falciparum (isolate Dd2).